The primary structure comprises 229 residues: Flavin-dependent thymidylate synthase (229 aa).

Positions 1–217 (MEFKVLDKGF…PWTFESFLKF (217 aa)) constitute a ThyX domain. Residues Thr-55, 78–80 (RHR), and Glu-86 each bind FAD. DUMP-binding positions include 75–78 (QWFR), 86–90 (EASLR), and Arg-156. A ThyX motif motif is present at residues 78 to 88 (RHRIGSFNEAS). FAD is bound by residues 172-174 (NAR) and Asn-178. Arg-183 serves as a coordination point for dUMP. The Involved in ionization of N3 of dUMP, leading to its activation role is filled by Arg-183.

The protein belongs to the thymidylate synthase ThyX family. As to quaternary structure, homotetramer. It depends on FAD as a cofactor.

It carries out the reaction dUMP + (6R)-5,10-methylene-5,6,7,8-tetrahydrofolate + NADPH + H(+) = dTMP + (6S)-5,6,7,8-tetrahydrofolate + NADP(+). The protein operates within pyrimidine metabolism; dTTP biosynthesis. Functionally, catalyzes the reductive methylation of 2'-deoxyuridine-5'-monophosphate (dUMP) to 2'-deoxythymidine-5'-monophosphate (dTMP) while utilizing 5,10-methylenetetrahydrofolate (mTHF) as the methyl donor, and NADPH and FADH(2) as the reductant. This chain is Flavin-dependent thymidylate synthase, found in Thermosipho melanesiensis (strain DSM 12029 / CIP 104789 / BI429).